Here is a 360-residue protein sequence, read N- to C-terminus: DNA replication and repair protein RecF (360 aa).

33 to 40 (GENGSGKT) provides a ligand contact to ATP.

The protein belongs to the RecF family.

It localises to the cytoplasm. Its function is as follows. The RecF protein is involved in DNA metabolism; it is required for DNA replication and normal SOS inducibility. RecF binds preferentially to single-stranded, linear DNA. It also seems to bind ATP. The protein is DNA replication and repair protein RecF of Rickettsia canadensis (strain McKiel).